A 579-amino-acid chain; its full sequence is Copine-E (579 aa).

2 consecutive C2 domains span residues isoleucine 45–glycine 175 and glutamine 183–leucine 304. Residues aspartate 80, aspartate 86, aspartate 145, aspartate 147, and aspartate 153 each contribute to the Ca(2+) site. The region spanning asparagine 345 to leucine 552 is the VWFA domain.

It belongs to the copine family. Ca(2+) is required as a cofactor.

This chain is Copine-E (cpnE), found in Dictyostelium discoideum (Social amoeba).